The sequence spans 283 residues: Phospholipase C (283 aa).

An N-terminal signal peptide occupies residues 1–24; that stretch reads MKKKVLALGAAITLVAPLQSVAFA. Residues 25–38 constitute a propeptide that is removed on maturation; it reads HENDGGQRFGVIPR. Zn(2+)-binding residues include Trp-39, His-52, Asp-93, His-107, His-156, Asp-160, His-166, His-180, and Glu-184. The region spanning 39-283 is the Zn-dependent PLC domain; the sequence is WSAEDKHKEG…QLWFDTYGNR (245 aa).

This sequence belongs to the bacterial zinc-metallophospholipase C family. As to quaternary structure, monomer. Requires Zn(2+) as cofactor.

The catalysed reaction is a 1,2-diacyl-sn-glycero-3-phosphocholine + H2O = phosphocholine + a 1,2-diacyl-sn-glycerol + H(+). Required, with sphingomyelinase, to effect target cell lysis (hemolysis). The polypeptide is Phospholipase C (cerA) (Bacillus cereus).